The sequence spans 38 residues: Large ribosomal subunit protein bL36 (38 aa).

It belongs to the bacterial ribosomal protein bL36 family.

This Prochlorococcus marinus (strain SARG / CCMP1375 / SS120) protein is Large ribosomal subunit protein bL36.